The following is a 375-amino-acid chain: Alcohol dehydrogenase 1A (375 aa).

At Ser2 the chain carries N-acetylserine. At Ser23 the chain carries Phosphoserine. Position 47 (Cys47) interacts with Zn(2+). 48-52 is a binding site for NAD(+); sequence GTDDH. Positions 68, 98, 101, 104, 112, and 175 each coordinate Zn(2+). NAD(+)-binding positions include 200–205, Asp224, Lys229, Ile270, 293–295, 318–320, and Arg370; these read GLGGVG, VGV, and AVL.

It belongs to the zinc-containing alcohol dehydrogenase family. As to quaternary structure, dimer of identical or heterodimer of closely related subunits alpha, beta, or gamma that are encoded by genes ADH1A, ADH1B, and ADH1C, respectively. Requires Zn(2+) as cofactor.

It localises to the cytoplasm. The catalysed reaction is a primary alcohol + NAD(+) = an aldehyde + NADH + H(+). It carries out the reaction a secondary alcohol + NAD(+) = a ketone + NADH + H(+). It catalyses the reaction butan-1-ol + NAD(+) = butanal + NADH + H(+). The enzyme catalyses 1-propanol + NAD(+) = propanal + NADH + H(+). Its function is as follows. Alcohol dehydrogenase. Oxidizes primary as well as secondary alcohols. Ethanol is a very poor substrate. The protein is Alcohol dehydrogenase 1A (ADH1A) of Pongo abelii (Sumatran orangutan).